The chain runs to 160 residues: 6-hydroxypseudooxynicotine dehydrogenase complex subunit beta (160 aa).

The region spanning F4–L80 is the 2Fe-2S ferredoxin-type domain. [2Fe-2S] cluster contacts are provided by C42, C47, C50, C62, C101, C104, C137, and C139.

Heterohexamer of 2 alpha (kdhA), 2 beta (kdhB) and 2 gamma (kdhC) subunit. Dimer of heterotrimers. [2Fe-2S] cluster serves as cofactor.

It catalyses the reaction 6-hydroxypseudooxynicotine + A + H2O = 2,6-dihydroxypseudooxynicotine + AH2. It participates in alkaloid degradation; nicotine degradation. Functionally, molybdo-flavoprotein enzyme complex involved in nicotine degradation. The subunit gamma (large subunit) contains the substrate-binding sites, the subunit alpha (medium subunit) binds FAD and the subunit beta (small subunit) has a 2Fe-2S ferredoxin-type domain which binds 2 2Fe-2S clusters. The polypeptide is 6-hydroxypseudooxynicotine dehydrogenase complex subunit beta (kdhB) (Paenarthrobacter nicotinovorans (Arthrobacter nicotinovorans)).